Consider the following 296-residue polypeptide: tRNA dimethylallyltransferase (296 aa).

2–9 (GPTASGKT) is an ATP binding site. Residue 4-9 (TASGKT) participates in substrate binding. Interaction with substrate tRNA regions lie at residues 27 to 30 (DSAL), 151 to 155 (QRLSR), and 232 to 237 (RCVGYR).

Belongs to the IPP transferase family. As to quaternary structure, monomer. It depends on Mg(2+) as a cofactor.

It carries out the reaction adenosine(37) in tRNA + dimethylallyl diphosphate = N(6)-dimethylallyladenosine(37) in tRNA + diphosphate. Functionally, catalyzes the transfer of a dimethylallyl group onto the adenine at position 37 in tRNAs that read codons beginning with uridine, leading to the formation of N6-(dimethylallyl)adenosine (i(6)A). This is tRNA dimethylallyltransferase from Shewanella woodyi (strain ATCC 51908 / MS32).